The following is a 308-amino-acid chain: Reaction center protein M chain (308 aa).

The next 3 helical transmembrane spans lie at 54–80 (GSLG…YQAG), 111–140 (KEGG…RAQA), and 143–168 (MGKH…RPIL). His-183 and His-203 together coordinate (7R,8Z)-bacteriochlorophyll b. The helical transmembrane segment at 198–226 (FYNPFHGLSIAFLYGSALLFAMHGATILA) threads the bilayer. 2 residues coordinate Fe cation: His-220 and Glu-235. Trp-253 lines the a ubiquinone pocket. Residues 260-286 (NATMEGIHRWAIWMAVLVTLTGGIGIL) form a helical membrane-spanning segment. His-267 provides a ligand contact to Fe cation.

It belongs to the reaction center PufL/M/PsbA/D family. Reaction center is composed of four bacteriochlorophylls, two bacteriopheophytins, two ubiquinones, one iron, and three highly hydrophobic polypeptide chains (designated L, M, and H).

It is found in the cellular chromatophore membrane. In terms of biological role, the reaction center is a membrane-bound complex that mediates the initial photochemical event in the electron transfer process of photosynthesis. This Cereibacter sphaeroides (strain ATCC 17023 / DSM 158 / JCM 6121 / CCUG 31486 / LMG 2827 / NBRC 12203 / NCIMB 8253 / ATH 2.4.1.) (Rhodobacter sphaeroides) protein is Reaction center protein M chain (pufM).